Here is a 409-residue protein sequence, read N- to C-terminus: Nucleoprotein (409 aa).

Disordered regions lie at residues 1-84 (MASG…KGGR) and 121-194 (ADTK…DSGD). Residues 15-31 (PVIKLGGPKPPKVGSSG) show a composition bias toward low complexity. An RNA-binding region spans residues 29 to 160 (SSGNASWFQA…GNFRWDFIPL (132 aa)). In terms of domain architecture, CoV N NTD spans 31 to 156 (GNASWFQAIK…GGPDGNFRWD (126 aa)). A compositionally biased stretch (basic residues) spans 70 to 84 (YWRRQARFKPGKGGR). Over residues 162–179 (RGRSGRSTAASSAAASRA) the composition is skewed to low complexity. Over residues 180–192 (PSREGSRGRRSDS) the composition is skewed to basic and acidic residues. 2 positions are modified to phosphoserine; by host: S190 and S192. A CoV N CTD domain is found at 215–331 (TKAKADEMAH…QCVDGVGTRP (117 aa)). The dimerization stretch occupies residues 226-333 (RYCKRTIPPN…VDGVGTRPKD (108 aa)). Cystine bridges form between C281–C308 and C320–C323. Residues 327–396 (VGTRPKDDEP…QLEFYDEPKV (70 aa)) are disordered. The segment covering 358-367 (QRPKKEKKLK) has biased composition (basic residues). Over residues 368–384 (KQDDEADKALTSDEERN) the composition is skewed to basic and acidic residues. T378 is modified (phosphothreonine; by host). S379 carries the post-translational modification Phosphoserine; by host.

The protein belongs to the gammacoronavirus nucleocapsid protein family. In terms of assembly, homooligomer. Both monomeric and oligomeric forms interact with RNA. Interacts with protein M. Interacts with NSP3; this interaction serves to tether the genome to the newly translated replicase-transcriptase complex at a very early stage of infection. Post-translationally, ADP-ribosylated. The ADP-ribosylation is retained in the virion during infection. In terms of processing, phosphorylated on serine and threonine residues.

The protein resides in the virion. Its subcellular location is the host endoplasmic reticulum-Golgi intermediate compartment. It localises to the host Golgi apparatus. Packages the positive strand viral genome RNA into a helical ribonucleocapsid (RNP) and plays a fundamental role during virion assembly through its interactions with the viral genome and membrane protein M. Plays an important role in enhancing the efficiency of subgenomic viral RNA transcription as well as viral replication. In Gallus gallus (Chicken), this protein is Nucleoprotein.